A 380-amino-acid chain; its full sequence is Succinate--CoA ligase [ADP-forming] subunit beta (380 aa).

Residues 9 to 236 (KGVFADAGIP…EAAGDELEAK (228 aa)) enclose the ATP-grasp domain. ATP-binding positions include Lys-45, 52-54 (GRG), Glu-91, Val-94, and Glu-99. Mg(2+) is bound by residues Asn-191 and Asp-205. Residues Asn-256 and 313-315 (GIT) each bind substrate.

The protein belongs to the succinate/malate CoA ligase beta subunit family. In terms of assembly, heterotetramer of two alpha and two beta subunits. Mg(2+) serves as cofactor.

It catalyses the reaction succinate + ATP + CoA = succinyl-CoA + ADP + phosphate. It carries out the reaction GTP + succinate + CoA = succinyl-CoA + GDP + phosphate. It functions in the pathway carbohydrate metabolism; tricarboxylic acid cycle; succinate from succinyl-CoA (ligase route): step 1/1. Succinyl-CoA synthetase functions in the citric acid cycle (TCA), coupling the hydrolysis of succinyl-CoA to the synthesis of either ATP or GTP and thus represents the only step of substrate-level phosphorylation in the TCA. The beta subunit provides nucleotide specificity of the enzyme and binds the substrate succinate, while the binding sites for coenzyme A and phosphate are found in the alpha subunit. The sequence is that of Succinate--CoA ligase [ADP-forming] subunit beta from Natronomonas pharaonis (strain ATCC 35678 / DSM 2160 / CIP 103997 / JCM 8858 / NBRC 14720 / NCIMB 2260 / Gabara) (Halobacterium pharaonis).